A 167-amino-acid polypeptide reads, in one-letter code: Large ribosomal subunit protein uL10 (167 aa).

It belongs to the universal ribosomal protein uL10 family. As to quaternary structure, part of the ribosomal stalk of the 50S ribosomal subunit. The N-terminus interacts with L11 and the large rRNA to form the base of the stalk. The C-terminus forms an elongated spine to which L12 dimers bind in a sequential fashion forming a multimeric L10(L12)X complex.

Functionally, forms part of the ribosomal stalk, playing a central role in the interaction of the ribosome with GTP-bound translation factors. This Mycoplasma mobile (strain ATCC 43663 / 163K / NCTC 11711) (Mesomycoplasma mobile) protein is Large ribosomal subunit protein uL10.